Reading from the N-terminus, the 690-residue chain is Xylosyl- and glucuronyltransferase LARGE2 (690 aa).

Over 1–7 the chain is Cytoplasmic; sequence MLPRGRP. A helical; Signal-anchor for type II membrane protein membrane pass occupies residues 8–28; sequence RALGAALLLLLLLVVGFFLFG. Topologically, residues 29–690 are lumenal; it reads RDPEYGLGTT…TALQQSRSRA (662 aa). Residues Asn50 and Asn77 are each glycosylated (N-linked (GlcNAc...) asparagine). The xylosyltransferase activity stretch occupies residues 67–342; sequence LHVAIVCAGY…FLGFDGKLLC (276 aa). Mn(2+) contacts are provided by Asp171 and Asp173. A glycan (N-linked (GlcNAc...) asparagine) is linked at Asn201. Positions 343-686 are glucuronyltransferase activity; that stretch reads RELFGCPNQF…LKYLTALQQS (344 aa). Mn(2+)-binding residues include Asp491 and Asp493.

It in the C-terminal section; belongs to the glycosyltransferase 49 family. In the N-terminal section; belongs to the glycosyltransferase 8 family. In terms of assembly, interacts with B4GAT1. The cofactor is Mn(2+).

It is found in the golgi apparatus membrane. It catalyses the reaction 3-O-[beta-D-GlcA-(1-&gt;3)-beta-D-Xyl-(1-&gt;4)-Rib-ol-P-Rib-ol-P-3-beta-D-GalNAc-(1-&gt;3)-beta-D-GlcNAc-(1-&gt;4)-(O-6-P-alpha-D-Man)]-Thr-[protein] + UDP-alpha-D-xylose = 3-O-[alpha-D-Xyl-(1-&gt;3)-beta-D-GlcA-(1-&gt;4)-beta-D-Xyl-(1-&gt;4)-Rib-ol-P-Rib-ol-P-3-beta-D-GalNAc-(1-&gt;3)-beta-D-GlcNAc-(1-&gt;4)-(O-6-P-alpha-D-Man)]-Thr-[protein] + UDP + H(+). The enzyme catalyses 3-O-{(1-&gt;[3)-alpha-D-Xyl-(1-&gt;3)-beta-D-GlcA-(1-&gt;](n)-4)-beta-D-Xyl-(1-&gt;4)-Rib-ol-P-Rib-ol-P-3-beta-D-GalNAc-(1-&gt;3)-beta-D-GlcNAc-(1-&gt;4)-O-6-P-alpha-D-Man}-L-Thr-[protein] + UDP-alpha-D-glucuronate = 3-O-{beta-D-GlcA-(1-&gt;[3)-alpha-D-Xyl-(1-&gt;3)-beta-D-GlcA-(1-&gt;](n)-4)-beta-D-Xyl-(1-&gt;4)-Rib-ol-P-Rib-ol-P-3-beta-D-GalNAc-(1-&gt;3)-beta-D-GlcNAc-(1-&gt;4)-O-6-P-alpha-D-Man}-L-Thr-[protein] + UDP + H(+). The catalysed reaction is 3-O-{beta-D-GlcA-(1-&gt;[3)-alpha-D-Xyl-(1-&gt;3)-beta-D-GlcA-(1-&gt;](n)-4)-beta-D-Xyl-(1-&gt;4)-Rib-ol-P-Rib-ol-P-3-beta-D-GalNAc-(1-&gt;3)-beta-D-GlcNAc-(1-&gt;4)-O-6-P-alpha-D-Man}-L-Thr-[protein] + UDP-alpha-D-xylose = 3-O-{(1-&gt;[3)-alpha-D-Xyl-(1-&gt;3)-beta-D-GlcA-(1-&gt;](n+1)-4)-beta-D-Xyl-(1-&gt;4)-Rib-ol-P-Rib-ol-P-3-beta-D-GalNAc-(1-&gt;3)-beta-D-GlcNAc-(1-&gt;4)-O-6-P-alpha-D-Man}-L-Thr-[protein] + UDP + H(+). Its pathway is protein modification; protein glycosylation. Functionally, bifunctional glycosyltransferase with both alpha-1,3-xylosyltransferase and beta-1,3-glucuronyltransferase activities involved in the maturation of alpha-dystroglycan (DAG1) by glycosylation leading to DAG1 binding to laminin G-like domain-containing extracellular proteins with high affinity and in a phosphorylated-O-mannosyl trisaccharide dependent manner. Elongates the glucuronyl-beta-1,4-xylose-beta disaccharide primer structure by adding repeating units [-3-Xylose-alpha-1,3-GlcA-beta-1-] to produce a heteropolysaccharide. Supports the maturation of DAG1 more effectively than LARGE1. In addition, can modify both heparan sulfate (HS)- and chondroitin/dermatan sulfate (CS/DS)-proteoglycans (PGs), namely GPC4, with a glycosaminoglycan (GAG)-like polysaccharide composed of xylose and glucuronic acid to confer laminin binding. This is Xylosyl- and glucuronyltransferase LARGE2 from Rattus norvegicus (Rat).